Reading from the N-terminus, the 124-residue chain is Small ribosomal subunit protein uS12 (124 aa).

The residue at position 89 (aspartate 89) is a 3-methylthioaspartic acid. The segment at 104 to 124 is disordered; it reads TDGVENRKQSRSKYGTKRPKK. Positions 112 to 124 are enriched in basic residues; sequence QSRSKYGTKRPKK.

It belongs to the universal ribosomal protein uS12 family. In terms of assembly, part of the 30S ribosomal subunit. Contacts proteins S8 and S17. May interact with IF1 in the 30S initiation complex.

Functionally, with S4 and S5 plays an important role in translational accuracy. In terms of biological role, interacts with and stabilizes bases of the 16S rRNA that are involved in tRNA selection in the A site and with the mRNA backbone. Located at the interface of the 30S and 50S subunits, it traverses the body of the 30S subunit contacting proteins on the other side and probably holding the rRNA structure together. The combined cluster of proteins S8, S12 and S17 appears to hold together the shoulder and platform of the 30S subunit. The polypeptide is Small ribosomal subunit protein uS12 (Thermosipho melanesiensis (strain DSM 12029 / CIP 104789 / BI429)).